The chain runs to 72 residues: Translation initiation factor IF-1 (72 aa).

The region spanning 1 to 72 (MAKDDVIEVE…TRGRIVWRGK (72 aa)) is the S1-like domain.

Belongs to the IF-1 family. In terms of assembly, component of the 30S ribosomal translation pre-initiation complex which assembles on the 30S ribosome in the order IF-2 and IF-3, IF-1 and N-formylmethionyl-tRNA(fMet); mRNA recruitment can occur at any time during PIC assembly.

It is found in the cytoplasm. Its function is as follows. One of the essential components for the initiation of protein synthesis. Stabilizes the binding of IF-2 and IF-3 on the 30S subunit to which N-formylmethionyl-tRNA(fMet) subsequently binds. Helps modulate mRNA selection, yielding the 30S pre-initiation complex (PIC). Upon addition of the 50S ribosomal subunit IF-1, IF-2 and IF-3 are released leaving the mature 70S translation initiation complex. The protein is Translation initiation factor IF-1 of Caldanaerobacter subterraneus subsp. tengcongensis (strain DSM 15242 / JCM 11007 / NBRC 100824 / MB4) (Thermoanaerobacter tengcongensis).